A 330-amino-acid chain; its full sequence is Endo-1,4-beta-xylanase (330 aa).

The GH10 domain occupies 2 to 330 (CSSIPSLREV…KPAFWRVVNI (329 aa)). Glutamate 133 serves as the catalytic Proton donor. The active-site Nucleophile is the glutamate 240.

This sequence belongs to the glycosyl hydrolase 10 (cellulase F) family. Cytoplasmic xylanase subfamily.

It localises to the cytoplasm. The enzyme catalyses Endohydrolysis of (1-&gt;4)-beta-D-xylosidic linkages in xylans.. It participates in glycan degradation; xylan degradation. The sequence is that of Endo-1,4-beta-xylanase (xynA) from Geobacillus stearothermophilus (Bacillus stearothermophilus).